Reading from the N-terminus, the 336-residue chain is Anthranilate phosphoribosyltransferase (336 aa).

5-phospho-alpha-D-ribose 1-diphosphate contacts are provided by residues glycine 80, 83-84 (GD), threonine 88, 90-93 (NIST), 108-116 (KHGNRSITS), and serine 120. Residue glycine 80 participates in anthranilate binding. Residue serine 92 coordinates Mg(2+). Anthranilate is bound at residue asparagine 111. Arginine 166 provides a ligand contact to anthranilate. Aspartate 224 and glutamate 225 together coordinate Mg(2+).

It belongs to the anthranilate phosphoribosyltransferase family. Homodimer. Mg(2+) serves as cofactor.

The enzyme catalyses N-(5-phospho-beta-D-ribosyl)anthranilate + diphosphate = 5-phospho-alpha-D-ribose 1-diphosphate + anthranilate. Its pathway is amino-acid biosynthesis; L-tryptophan biosynthesis; L-tryptophan from chorismate: step 2/5. Its function is as follows. Catalyzes the transfer of the phosphoribosyl group of 5-phosphorylribose-1-pyrophosphate (PRPP) to anthranilate to yield N-(5'-phosphoribosyl)-anthranilate (PRA). This chain is Anthranilate phosphoribosyltransferase, found in Caldicellulosiruptor saccharolyticus (strain ATCC 43494 / DSM 8903 / Tp8T 6331).